A 557-amino-acid chain; its full sequence is Putative sensory transducer protein (557 aa).

Residues 122-145 traverse the membrane as a helical segment; the sequence is TASTVMIVVIFVGILIAIALGVFI. Residues 147–199 form the HAMP domain; that stretch reads RIISKPIGQMVEAADRLALGDVEVDVKAETRDEIGKLAESFKRMIENIREQAY. Residues 243-472 enclose the Methyl-accepting transducer domain; that stretch reads VAAQVAAGAK…ESAAASEELS (230 aa). Gln-268 carries the post-translational modification Glutamate methyl ester (Gln). Glu-274 is subject to Glutamate methyl ester (Glu). Gln-281 carries the post-translational modification Glutamate methyl ester (Gln). A Glutamate methyl ester (Glu) modification is found at Glu-463. Residues 511–541 show a composition bias toward basic and acidic residues; the sequence is DYTENKQPKSYSKEENGEYSDGKETAEKDVG. Residues 511–542 are disordered; it reads DYTENKQPKSYSKEENGEYSDGKETAEKDVGG.

It belongs to the methyl-accepting chemotaxis (MCP) protein family.

It is found in the cell membrane. May bind attractants or detect changes in the extracellular concentration of soluble sugars. The protein is Putative sensory transducer protein of Acetivibrio thermocellus (strain ATCC 27405 / DSM 1237 / JCM 9322 / NBRC 103400 / NCIMB 10682 / NRRL B-4536 / VPI 7372) (Clostridium thermocellum).